Consider the following 366-residue polypeptide: Chorismate synthase (366 aa).

NADP(+)-binding residues include arginine 48 and arginine 54. FMN-binding positions include 125-127 (RSS), 237-238 (NA), glycine 277, 292-296 (KPTSS), and arginine 318.

Belongs to the chorismate synthase family. As to quaternary structure, homotetramer. The cofactor is FMNH2.

It catalyses the reaction 5-O-(1-carboxyvinyl)-3-phosphoshikimate = chorismate + phosphate. Its pathway is metabolic intermediate biosynthesis; chorismate biosynthesis; chorismate from D-erythrose 4-phosphate and phosphoenolpyruvate: step 7/7. Catalyzes the anti-1,4-elimination of the C-3 phosphate and the C-6 proR hydrogen from 5-enolpyruvylshikimate-3-phosphate (EPSP) to yield chorismate, which is the branch point compound that serves as the starting substrate for the three terminal pathways of aromatic amino acid biosynthesis. This reaction introduces a second double bond into the aromatic ring system. The chain is Chorismate synthase from Acidovorax sp. (strain JS42).